A 319-amino-acid polypeptide reads, in one-letter code: Red chlorophyll catabolite reductase, chloroplastic (319 aa).

A chloroplast-targeting transit peptide spans 1–39 (MAMIFCNTLYSSSSPSYLSPLTSKPSRFSKNLRPRAQFQ). Residues glutamate 154 and 207–209 (YVS) each bind red chlorophyll catabolite. Residues 255–286 (LERCVKEEEEKIVVGEEERMELERRDKSFRRK) are a coiled coil. Aspartate 291 contributes to the red chlorophyll catabolite binding site.

Homodimer. Interacts with HCAR. Interacts with SGR1, NYC1, NOL, PPH, PAO and the LHCII complex. Part of a SGR1-CCE-LHCII complex, which acts in chlorophyll breakdown. In terms of tissue distribution, expressed in all tissues tested, including roots.

The protein localises to the plastid. It is found in the chloroplast stroma. Its subcellular location is the chloroplast thylakoid membrane. The enzyme catalyses primary fluorescent chlorophyll catabolite + 2 oxidized [2Fe-2S]-[ferredoxin] = red chlorophyll catabolite + 2 reduced [2Fe-2S]-[ferredoxin] + 3 H(+). It functions in the pathway porphyrin-containing compound metabolism; chlorophyll degradation. Its function is as follows. Catalyzes the key reaction of chlorophyll catabolism, porphyrin macrocycle cleavage of pheophorbide a (pheide a) to a primary fluorescent catabolite (pFCC). Works in a two-step reaction with pheophorbide a oxygenase (PaO) by reducing the C20/C1 double bond of the intermediate, RCC. Belongs to the chlorophyll catabolic enzymes (CCEs). This chain is Red chlorophyll catabolite reductase, chloroplastic, found in Arabidopsis thaliana (Mouse-ear cress).